The chain runs to 105 residues: MAAKIRRNDEVIILAGKDKGKKGKVTKVLTTGKVVVEGINLVKKHQKPVPALGQQGGIVEQEAAIDASNVAVFNAATGKADRIGFRIEDGKKVRFFKSNGETVSN.

This sequence belongs to the universal ribosomal protein uL24 family. In terms of assembly, part of the 50S ribosomal subunit.

In terms of biological role, one of two assembly initiator proteins, it binds directly to the 5'-end of the 23S rRNA, where it nucleates assembly of the 50S subunit. Functionally, one of the proteins that surrounds the polypeptide exit tunnel on the outside of the subunit. The chain is Large ribosomal subunit protein uL24 from Vibrio atlanticus (strain LGP32) (Vibrio splendidus (strain Mel32)).